The primary structure comprises 198 residues: Large ribosomal subunit protein bL21 (198 aa).

It belongs to the bacterial ribosomal protein bL21 family. In terms of assembly, part of the 50S ribosomal subunit. Contacts protein L20.

In terms of biological role, this protein binds to 23S rRNA in the presence of protein L20. This Ruegeria sp. (strain TM1040) (Silicibacter sp.) protein is Large ribosomal subunit protein bL21.